The primary structure comprises 170 residues: Adenine phosphoribosyltransferase (170 aa).

Belongs to the purine/pyrimidine phosphoribosyltransferase family. Homodimer.

The protein localises to the cytoplasm. The enzyme catalyses AMP + diphosphate = 5-phospho-alpha-D-ribose 1-diphosphate + adenine. It functions in the pathway purine metabolism; AMP biosynthesis via salvage pathway; AMP from adenine: step 1/1. In terms of biological role, catalyzes a salvage reaction resulting in the formation of AMP, that is energically less costly than de novo synthesis. The sequence is that of Adenine phosphoribosyltransferase from Thermotoga sp. (strain RQ2).